The chain runs to 171 residues: 3-hydroxydecanoyl-[acyl-carrier-protein] dehydratase (171 aa).

The active site involves histidine 70.

Belongs to the thioester dehydratase family. FabA subfamily. Homodimer.

The protein localises to the cytoplasm. The catalysed reaction is a (3R)-hydroxyacyl-[ACP] = a (2E)-enoyl-[ACP] + H2O. It catalyses the reaction (3R)-hydroxydecanoyl-[ACP] = (2E)-decenoyl-[ACP] + H2O. It carries out the reaction (2E)-decenoyl-[ACP] = (3Z)-decenoyl-[ACP]. Its pathway is lipid metabolism; fatty acid biosynthesis. In terms of biological role, necessary for the introduction of cis unsaturation into fatty acids. Catalyzes the dehydration of (3R)-3-hydroxydecanoyl-ACP to E-(2)-decenoyl-ACP and then its isomerization to Z-(3)-decenoyl-ACP. Can catalyze the dehydratase reaction for beta-hydroxyacyl-ACPs with saturated chain lengths up to 16:0, being most active on intermediate chain length. The sequence is that of 3-hydroxydecanoyl-[acyl-carrier-protein] dehydratase from Shewanella oneidensis (strain ATCC 700550 / JCM 31522 / CIP 106686 / LMG 19005 / NCIMB 14063 / MR-1).